A 311-amino-acid polypeptide reads, in one-letter code: Protein translocase subunit SecF (311 aa).

A run of 6 helical transmembrane segments spans residues 23 to 42 (VSYS…ISIY), 140 to 160 (IEAG…YIGV), 164 to 184 (WYFG…ALGF), 194 to 214 (LSTI…SVVI), 246 to 266 (ILTV…GGKA), and 272 to 292 (VLVF…SAPI).

It belongs to the SecD/SecF family. SecF subfamily. Forms a complex with SecD. Part of the essential Sec protein translocation apparatus which comprises SecA, SecYEG and auxiliary proteins SecDF-YajC and YidC.

The protein resides in the cell inner membrane. Functionally, part of the Sec protein translocase complex. Interacts with the SecYEG preprotein conducting channel. SecDF uses the proton motive force (PMF) to complete protein translocation after the ATP-dependent function of SecA. In Rickettsia prowazekii (strain Madrid E), this protein is Protein translocase subunit SecF.